Reading from the N-terminus, the 32-residue chain is Ovostatin (32 aa).

The segment at residues 27 to 30 (CGEQ) is a cross-link (isoglutamyl cysteine thioester (Cys-Gln)).

This sequence belongs to the protease inhibitor I39 (alpha-2-macroglobulin) family. In terms of assembly, homotetramer, which consists of two pairs of disulfide-linked chains.

The protein localises to the secreted. Its function is as follows. Is able to inhibit all four classes of proteinases by a unique 'trapping' mechanism. This protein has a peptide stretch, called the 'bait region' which contains specific cleavage sites for different proteinases. When a proteinase cleaves the bait region, a conformational change is induced in the protein which traps the proteinase. The entrapped enzyme remains active against low molecular weight substrates (activity against high molecular weight substrates is greatly reduced). Following cleavage in the bait region a thioester bond is hydrolyzed and mediates the covalent binding of the protein to the proteinase. The chain is Ovostatin from Anas platyrhynchos (Mallard).